The chain runs to 422 residues: Serine--tRNA ligase (422 aa).

231–233 (TSE) is a binding site for L-serine. 262 to 264 (RQE) contacts ATP. L-serine is bound at residue E285. Residue 349 to 352 (EISS) coordinates ATP. S384 contacts L-serine.

Belongs to the class-II aminoacyl-tRNA synthetase family. Type-1 seryl-tRNA synthetase subfamily. As to quaternary structure, homodimer. The tRNA molecule binds across the dimer.

The protein resides in the cytoplasm. The enzyme catalyses tRNA(Ser) + L-serine + ATP = L-seryl-tRNA(Ser) + AMP + diphosphate + H(+). The catalysed reaction is tRNA(Sec) + L-serine + ATP = L-seryl-tRNA(Sec) + AMP + diphosphate + H(+). It functions in the pathway aminoacyl-tRNA biosynthesis; selenocysteinyl-tRNA(Sec) biosynthesis; L-seryl-tRNA(Sec) from L-serine and tRNA(Sec): step 1/1. Functionally, catalyzes the attachment of serine to tRNA(Ser). Is also able to aminoacylate tRNA(Sec) with serine, to form the misacylated tRNA L-seryl-tRNA(Sec), which will be further converted into selenocysteinyl-tRNA(Sec). This chain is Serine--tRNA ligase, found in Mycoplasma capricolum subsp. capricolum (strain California kid / ATCC 27343 / NCTC 10154).